Here is a 511-residue protein sequence, read N- to C-terminus: 2,3-bisphosphoglycerate-independent phosphoglycerate mutase (511 aa).

Mn(2+)-binding residues include D12 and S62. S62 acts as the Phosphoserine intermediate in catalysis. Substrate contacts are provided by residues H123, 154-155, R181, R187, 252-255, and K335; these read RD and RPDR. Mn(2+) contacts are provided by D402, H406, D444, H445, and H462.

This sequence belongs to the BPG-independent phosphoglycerate mutase family. In terms of assembly, monomer. It depends on Mn(2+) as a cofactor.

The enzyme catalyses (2R)-2-phosphoglycerate = (2R)-3-phosphoglycerate. Its pathway is carbohydrate degradation; glycolysis; pyruvate from D-glyceraldehyde 3-phosphate: step 3/5. In terms of biological role, catalyzes the interconversion of 2-phosphoglycerate and 3-phosphoglycerate. The sequence is that of 2,3-bisphosphoglycerate-independent phosphoglycerate mutase from Acholeplasma laidlawii (strain PG-8A).